Consider the following 261-residue polypeptide: Short-chain dehydrogenase/reductase AFUA_1G00990 (261 aa).

Positions 19, 67, 94, 169, 173, and 213 each coordinate NADP(+). The Proton donor role is filled by tyrosine 169. Lysine 173 serves as the catalytic Lowers pKa of active site Tyr.

It belongs to the short-chain dehydrogenases/reductases (SDR) family.

In terms of biological role, short-chain dehydrogenase/reductase; part of the gene cluster that mediates the biosynthesis of fumigermin that inhibits germination of spores of the inducing S.rapamycinicus, and thus helps the fungus to defend resources in the shared habitat against a bacterial competitor. The partially reducing polyketide synthase fngA alone is sufficient for the production of fumigermin. FgnA catalyzes the condensation of 3 malonyl-CoA units to an acetyl-CoA starter, and 3 methylations to yield fumigermin. It is remarkable that the five cluster genes including fgnA are conserved in distantly related fungi, supporting the assumption of a fumigermin cluster; it is thus possible that originally all five genes were functional, but that the genes encoding tailoring enzymes became inactive from mutations, similar to the case of the fgnA gene in strains A1163 and Af293. This Aspergillus fumigatus (strain ATCC MYA-4609 / CBS 101355 / FGSC A1100 / Af293) (Neosartorya fumigata) protein is Short-chain dehydrogenase/reductase AFUA_1G00990.